Reading from the N-terminus, the 156-residue chain is Endoribonuclease YbeY (156 aa).

Residues His115, His119, and His125 each contribute to the Zn(2+) site.

The protein belongs to the endoribonuclease YbeY family. Requires Zn(2+) as cofactor.

Its subcellular location is the cytoplasm. In terms of biological role, single strand-specific metallo-endoribonuclease involved in late-stage 70S ribosome quality control and in maturation of the 3' terminus of the 16S rRNA. The polypeptide is Endoribonuclease YbeY (Mannheimia succiniciproducens (strain KCTC 0769BP / MBEL55E)).